We begin with the raw amino-acid sequence, 203 residues long: Large ribosomal subunit protein bL25 (203 aa).

The segment at 1 to 21 is disordered; it reads MMENLQVNQREKKTRHSSRQC. A compositionally biased stretch (basic residues) spans 12–21; sequence KKTRHSSRQC.

It belongs to the bacterial ribosomal protein bL25 family. CTC subfamily. In terms of assembly, part of the 50S ribosomal subunit; part of the 5S rRNA/L5/L18/L25 subcomplex. Contacts the 5S rRNA. Binds to the 5S rRNA independently of L5 and L18.

Functionally, this is one of the proteins that binds to the 5S RNA in the ribosome where it forms part of the central protuberance. This chain is Large ribosomal subunit protein bL25, found in Clostridium perfringens (strain 13 / Type A).